The primary structure comprises 421 residues: CinA-like protein (421 aa).

Belongs to the CinA family.

This Myxococcus xanthus (strain DK1622) protein is CinA-like protein.